We begin with the raw amino-acid sequence, 1220 residues long: Post-transcriptional regulator MKT1L (1220 aa).

The tract at residues 1–107 (MRKAGANRNN…SPWNSPPQQT (107 aa)) is disordered. Over residues 34–70 (PHHHQHQHHHQHQHQHQHQHQHPHQHPHQHHHHHPHH) the composition is skewed to basic residues.

It belongs to the XPG/RAD2 endonuclease family. As to quaternary structure, forms a complex composed of at least MKT1L, PBP1, XAC1 and LSM12.

It localises to the cytoplasm. Functionally, involved in post-transcriptional regulation of gene expression. This is Post-transcriptional regulator MKT1L from Trypanosoma brucei brucei (strain 927/4 GUTat10.1).